The chain runs to 277 residues: MEMO1 family protein TRQ2_0860 (277 aa).

The protein belongs to the MEMO1 family.

The chain is MEMO1 family protein TRQ2_0860 from Thermotoga sp. (strain RQ2).